The primary structure comprises 455 residues: Argininosuccinate lyase (455 aa).

The protein belongs to the lyase 1 family. Argininosuccinate lyase subfamily.

Its subcellular location is the cytoplasm. It catalyses the reaction 2-(N(omega)-L-arginino)succinate = fumarate + L-arginine. The protein operates within amino-acid biosynthesis; L-arginine biosynthesis; L-arginine from L-ornithine and carbamoyl phosphate: step 3/3. This is Argininosuccinate lyase from Caulobacter sp. (strain K31).